The chain runs to 245 residues: Ribonuclease 3 (245 aa).

One can recognise an RNase III domain in the interval 19–148 (FRAFQQKLGI…FIGALYLDQG (130 aa)). Glu61 is a binding site for Mg(2+). Residue Asp65 is part of the active site. Residues Asp134 and Glu137 each coordinate Mg(2+). The active site involves Glu137. In terms of domain architecture, DRBM spans 174-243 (DYKSQLQELI…AAEALRKLKE (70 aa)).

This sequence belongs to the ribonuclease III family. In terms of assembly, homodimer. It depends on Mg(2+) as a cofactor.

It localises to the cytoplasm. It carries out the reaction Endonucleolytic cleavage to 5'-phosphomonoester.. Its function is as follows. Digests double-stranded RNA. Involved in the processing of primary rRNA transcript to yield the immediate precursors to the large and small rRNAs (23S and 16S). Processes some mRNAs, and tRNAs when they are encoded in the rRNA operon. Processes pre-crRNA and tracrRNA of type II CRISPR loci if present in the organism. The polypeptide is Ribonuclease 3 (Bacillus cytotoxicus (strain DSM 22905 / CIP 110041 / 391-98 / NVH 391-98)).